We begin with the raw amino-acid sequence, 648 residues long: Magnetosome protein MamZ (648 aa).

The segment at 1–431 is major facilitator domain; sequence MLEAWMPKSG…YAAWLLANGI (431 aa). The next 18 membrane-spanning stretches (helical) occupy residues 28-49, 69-87, 94-113, 119-143, 163-182, 188-207, 252-273, 285-305, 317-335, 341-361, 373-395, 407-428, 449-468, 488-506, 518-538, 558-574, 595-612, and 618-634; these read IIYLLMTVGSLVAALSISIQPL, IQVVAEIVSIVCVGWFGLL, VRIIATGFLIAVAGAAMSLL, LAFGAAGLVLFYLTRVLLTVGADTV, LMGNLVFMMVFGGTMLSAII, YKGGVFIIMCLPLLIGIAGF, FYTRADVIILSLFFSLWCISVS, AHAAVMIGLLGLAVLAAIPLW, AIGASLSLAAVGYIWLGMF, WLVALPLLMVGIGHAGCFVTL, ILGAMVGAGYLVGGLGTVMLVQS, APFILMGTGKMLVTLYAAWLLA, PLVFLTAALPFVWLIGRSVI, YLGDWAFTFLIISLSMRPV, YRRMIGLFAFFYAVLHVLAYV, FILLGLAAFLLLIPLAF, ATYVINALVALHFILAAN, and PYVYAAAVIVLLWYRFY. Residues 444-645 are ferric reductase-like domain, required for correct magnetite crystal formation; that stretch reads KVDWKPLVFL…WRGGNVLRAL (202 aa).

In the N-terminal section; belongs to the major facilitator superfamily. Probably interacts with FtsZ-like and MamY proteins.

The protein resides in the magnetosome membrane. Functionally, required for correct biomineralization of the magnetosome; probably converts and then transports some form of iron. It is partially functionally redundant with MamH. May function with MamX, MamY amd Mms6 in biomineralization. Despite its strong similarity to MsrQ (AC V6EX82) this protein does not genetically interact with bona fide MsrP (AC V6F0A4), which is encoded elsewhere in the genome. This chain is Magnetosome protein MamZ, found in Magnetospirillum gryphiswaldense (strain DSM 6361 / JCM 21280 / NBRC 15271 / MSR-1).